Consider the following 126-residue polypeptide: C-type natriuretic peptide 1 (126 aa).

The first 22 residues, 1 to 22 (MLCPALLCAALLLLTPVEITDA), serve as a signal peptide directing secretion. Residues 23 to 104 (RALQQPSDAA…KRAEPDRSRR (82 aa)) constitute a propeptide that is removed on maturation. A disulfide bridge connects residues C110 and C126.

Belongs to the natriuretic peptide family.

Its subcellular location is the secreted. Exhibits natriuretic and vasodepressant activity. Has cGMP-stimulating activity. May help to regulate body fluid homeostasis in a variety of aquatic environments. This is C-type natriuretic peptide 1 from Takifugu rubripes (Japanese pufferfish).